The chain runs to 374 residues: MTTGQRTIVRHAPGKLFVAGEYAVVDPGNPAILVAVDRHISVTVSDADADTGAADVVISSDLGPQAVGWRWHDGRLVVRDPDDGQQARSALAHVVSAIETVGRLLGERGQKVPALTLSVSSRLHEDGRKFGLGSSGAVTVATVAAVAAFCGLELSTDERFRLAMLATAELDPKGSGGDLAASTWGGWIAYQAPDRAFVLDLARRVGVDRTLKAPWPGHSVRRLPAPKGLTLEVGWTGEPASTASLVSDLHRRTWRGSASHQRFVETTTDCVRSAVTALESGDDTSLLHEIRRARQELARLDDEVGLGIFTPKLTALCDAAEAVGGAAKPSGAGGGDCGIALLDAEASRDITHVRQRWETAGVLPLPLTPALEGI.

This sequence belongs to the GHMP kinase family. In terms of assembly, homodimer. Requires Mg(2+) as cofactor.

The catalysed reaction is (R)-5-phosphomevalonate + ATP = (R)-5-diphosphomevalonate + ADP. It functions in the pathway isoprenoid biosynthesis; isopentenyl diphosphate biosynthesis via mevalonate pathway; isopentenyl diphosphate from (R)-mevalonate: step 2/3. In terms of biological role, catalyzes the phosphorylation of (R)-mevalonate 5-phosphate (MVAP) to (R)-mevalonate 5-diphosphate (MVAPP). Functions in the mevalonate (MVA) pathway leading to isopentenyl diphosphate (IPP), a key precursor for the biosynthesis of isoprenoid compounds. This is Phosphomevalonate kinase from Streptomyces sp. (strain CL190).